Consider the following 716-residue polypeptide: DNA ligase (716 aa).

NAD(+) is bound by residues 42–46 (DAEYD), 91–92 (SL), and Glu125. The active-site N6-AMP-lysine intermediate is Lys127. Arg148, Glu184, Lys300, and Lys324 together coordinate NAD(+). Cys429, Cys432, Cys447, and Cys453 together coordinate Zn(2+). Residues 638–716 (TASSPIAGKI…EEAWLQLIEG (79 aa)) form the BRCT domain.

This sequence belongs to the NAD-dependent DNA ligase family. LigA subfamily. Mg(2+) is required as a cofactor. It depends on Mn(2+) as a cofactor.

It catalyses the reaction NAD(+) + (deoxyribonucleotide)n-3'-hydroxyl + 5'-phospho-(deoxyribonucleotide)m = (deoxyribonucleotide)n+m + AMP + beta-nicotinamide D-nucleotide.. Functionally, DNA ligase that catalyzes the formation of phosphodiester linkages between 5'-phosphoryl and 3'-hydroxyl groups in double-stranded DNA using NAD as a coenzyme and as the energy source for the reaction. It is essential for DNA replication and repair of damaged DNA. This is DNA ligase from Bartonella henselae (strain ATCC 49882 / DSM 28221 / CCUG 30454 / Houston 1) (Rochalimaea henselae).